A 270-amino-acid chain; its full sequence is GHMVNAIAQIDEFVNLGANSIETDVSFDKNANPEYTYHGIPCDCGRTCTKWEYFNTFLGGLRKATTPGDSKYHEKLVLVVFDLKTGSLYDNQAYDAGTKLAKSLLQNYWNKGNNGGRAYIVLSIPNLDHYKLITGFKETLTKEEHPELMDKVGYDFSGNDDIGDVAKAYKKAGVTGHVWQSDGITNCLLRGLDRVRKAVANRDSSNGYINKVYYWTVDKRASTRDALDAGVDGIMTNYPDVIADVLSESAYTAKFRIATYDDNPWETFKN.

His-2 is a catalytic residue. Residues Glu-22 and Asp-24 each coordinate Mg(2+). Catalysis depends on His-38, which acts as the Nucleophile. 2 disulfide bridges follow: Cys-42–Cys-48 and Cys-44–Cys-187. Position 82 (Asp-82) interacts with Mg(2+).

The protein belongs to the arthropod phospholipase D family. Class II subfamily. Mg(2+) is required as a cofactor. In terms of tissue distribution, expressed by the venom gland.

It is found in the secreted. It catalyses the reaction an N-(acyl)-sphingosylphosphocholine = an N-(acyl)-sphingosyl-1,3-cyclic phosphate + choline. The catalysed reaction is an N-(acyl)-sphingosylphosphoethanolamine = an N-(acyl)-sphingosyl-1,3-cyclic phosphate + ethanolamine. It carries out the reaction a 1-acyl-sn-glycero-3-phosphocholine = a 1-acyl-sn-glycero-2,3-cyclic phosphate + choline. The enzyme catalyses a 1-acyl-sn-glycero-3-phosphoethanolamine = a 1-acyl-sn-glycero-2,3-cyclic phosphate + ethanolamine. Dermonecrotic toxins cleave the phosphodiester linkage between the phosphate and headgroup of certain phospholipids (sphingolipid and lysolipid substrates), forming an alcohol (often choline) and a cyclic phosphate. This toxin acts on sphingomyelin (SM). It may also act on ceramide phosphoethanolamine (CPE), lysophosphatidylcholine (LPC) and lysophosphatidylethanolamine (LPE), but not on lysophosphatidylserine (LPS), and lysophosphatidylglycerol (LPG). It acts by transphosphatidylation, releasing exclusively cyclic phosphate products as second products. Induces dermonecrosis, hemolysis, increased vascular permeability, edema, inflammatory response, and platelet aggregation. This chain is Dermonecrotic toxin LsaSicTox-alphaIB1av, found in Loxosceles sabina (Tucson recluse spider).